A 78-amino-acid chain; its full sequence is UPF0401 protein YubL (78 aa).

The protein belongs to the UPF0401 family.

This Salmonella typhi protein is UPF0401 protein YubL (yubL).